A 1323-amino-acid chain; its full sequence is Sister chromatid cohesion protein PDS5 homolog A-A (1323 aa).

An HEAT repeat occupies 385-421; that stretch reads FLVNDQLLGFVRERTLDKRWRVRKEAMMGLAQLYKKY. The interval 1139 to 1323 is disordered; the sequence is LNATGRRPYS…TAQRQIDLHR (185 aa). Low complexity predominate over residues 1153 to 1165; the sequence is SEISNNVSINSES. Polar residues-rich tracts occupy residues 1166 to 1176 and 1210 to 1220; these read DASVANRQSSE and LDQTAPSNTGT. Positions 1235–1246 are enriched in basic and acidic residues; that stretch reads NIRKESEEKKAD.

As to quaternary structure, interacts with the cohesin complex. Binds chromatin in a cohesin-dependent manner.

Its subcellular location is the nucleus. Its function is as follows. May regulate sister chromatid cohesion during mitosis and couple it to DNA replication. The sequence is that of Sister chromatid cohesion protein PDS5 homolog A-A (pds5a-a) from Xenopus laevis (African clawed frog).